A 496-amino-acid chain; its full sequence is GTPase Der (496 aa).

EngA-type G domains lie at 3 to 166 (PVVA…FDNL) and 208 to 381 (IKLA…RSAT). GTP-binding positions include 9-16 (GRPNVGKS), 56-60 (DTGGI), 118-121 (NKVD), 214-221 (GRPNVGKS), 261-265 (DTAGV), and 326-329 (NKWD). One can recognise a KH-like domain in the interval 382–466 (TRVGTSVLTR…PIRIQFQNSD (85 aa)).

This sequence belongs to the TRAFAC class TrmE-Era-EngA-EngB-Septin-like GTPase superfamily. EngA (Der) GTPase family. Associates with the 50S ribosomal subunit.

Functionally, GTPase that plays an essential role in the late steps of ribosome biogenesis. The chain is GTPase Der from Vibrio vulnificus (strain CMCP6).